The sequence spans 448 residues: Probable D-serine dehydratase (448 aa).

Lys-119 is modified (N6-(pyridoxal phosphate)lysine).

Belongs to the serine/threonine dehydratase family. DsdA subfamily. Requires pyridoxal 5'-phosphate as cofactor.

It catalyses the reaction D-serine = pyruvate + NH4(+). This Chromobacterium violaceum (strain ATCC 12472 / DSM 30191 / JCM 1249 / CCUG 213 / NBRC 12614 / NCIMB 9131 / NCTC 9757 / MK) protein is Probable D-serine dehydratase.